The sequence spans 119 residues: Large ribosomal subunit protein bL20 (119 aa).

It belongs to the bacterial ribosomal protein bL20 family.

Binds directly to 23S ribosomal RNA and is necessary for the in vitro assembly process of the 50S ribosomal subunit. It is not involved in the protein synthesizing functions of that subunit. In Dehalococcoides mccartyi (strain ATCC BAA-2100 / JCM 16839 / KCTC 5957 / BAV1), this protein is Large ribosomal subunit protein bL20.